The primary structure comprises 260 residues: Indole-3-glycerol phosphate synthase (260 aa).

The protein belongs to the TrpC family.

The catalysed reaction is 1-(2-carboxyphenylamino)-1-deoxy-D-ribulose 5-phosphate + H(+) = (1S,2R)-1-C-(indol-3-yl)glycerol 3-phosphate + CO2 + H2O. The protein operates within amino-acid biosynthesis; L-tryptophan biosynthesis; L-tryptophan from chorismate: step 4/5. This Staphylococcus aureus (strain MSSA476) protein is Indole-3-glycerol phosphate synthase.